A 390-amino-acid polypeptide reads, in one-letter code: Centrosomal protein of 44 kDa (390 aa).

Positions R11–T195 are binds with microtubules and centrioles. Positions E233 to V269 form a coiled coil. A disordered region spans residues R322–R348. 2 positions are modified to phosphoserine: S331 and S345. Over residues S335 to S345 the composition is skewed to low complexity. T346 carries the phosphothreonine modification. The stretch at S361–C385 forms a coiled coil.

As to quaternary structure, interacts with CROCC. Interacts with POC1B; the interaction is direct and recruits POC1B to centriolar microtubules. Binds to centriolar microtubules.

The protein resides in the cytoplasm. It is found in the cytoskeleton. The protein localises to the microtubule organizing center. Its subcellular location is the centrosome. It localises to the centriole. The protein resides in the spindle pole. It is found in the midbody. In terms of biological role, centriole-enriched microtubule-binding protein involved in centriole biogenesis. In collaboration with CEP295 and POC1B, is required for the centriole-to-centrosome conversion by ensuring the formation of bona fide centriole wall. Functions as a linker component that maintains centrosome cohesion. Associates with CROCC and regulates its stability and localization to the centrosome. The sequence is that of Centrosomal protein of 44 kDa (CEP44) from Homo sapiens (Human).